Consider the following 456-residue polypeptide: Shufflon protein D' (456 aa).

The segment at 1–361 (MKKYDRGWAS…TGAILSCQSG (361 aa)) is constant region. A variable region region spans residues 362–456 (TWRKSNSGST…KCSYVVACQN (95 aa)).

The polypeptide is Shufflon protein D' (Escherichia coli).